Here is a 283-residue protein sequence, read N- to C-terminus: Nucleoid occlusion protein (283 aa).

A DNA-binding region (H-T-H motif) is located at residues 142–161 (ESLAQRLGKGQSTIANKLRL).

This sequence belongs to the ParB family.

The protein localises to the cytoplasm. The protein resides in the nucleoid. Functionally, effects nucleoid occlusion by binding relatively nonspecifically to DNA and preventing the assembly of the division machinery in the vicinity of the nucleoid, especially under conditions that disturb the cell cycle. It helps to coordinate cell division and chromosome segregation by preventing the formation of the Z ring through the nucleoid, which would cause chromosome breakage. This Shouchella clausii (strain KSM-K16) (Alkalihalobacillus clausii) protein is Nucleoid occlusion protein.